The chain runs to 350 residues: UDP-N-acetylenolpyruvoylglucosamine reductase (350 aa).

The FAD-binding PCMH-type domain maps to 24-195 (HVDATARWLL…VAVEFNLPLL (172 aa)). Arg172 is an active-site residue. Ser245 (proton donor) is an active-site residue. Residue Glu342 is part of the active site.

It belongs to the MurB family. FAD is required as a cofactor.

It is found in the cytoplasm. It catalyses the reaction UDP-N-acetyl-alpha-D-muramate + NADP(+) = UDP-N-acetyl-3-O-(1-carboxyvinyl)-alpha-D-glucosamine + NADPH + H(+). It participates in cell wall biogenesis; peptidoglycan biosynthesis. In terms of biological role, cell wall formation. The chain is UDP-N-acetylenolpyruvoylglucosamine reductase from Xanthomonas campestris pv. campestris (strain 8004).